The following is a 247-amino-acid chain: Geranylgeranylglyceryl phosphate synthase (247 aa).

The Mg(2+) site is built by Asp23 and Ser52. Sn-glycerol 1-phosphate-binding positions include 171 to 177 (YLEAGSG), 203 to 204 (GG), and 225 to 226 (GT).

It belongs to the GGGP/HepGP synthase family. Group II subfamily. Mg(2+) serves as cofactor.

It is found in the cytoplasm. The catalysed reaction is sn-glycerol 1-phosphate + (2E,6E,10E)-geranylgeranyl diphosphate = sn-3-O-(geranylgeranyl)glycerol 1-phosphate + diphosphate. It participates in membrane lipid metabolism; glycerophospholipid metabolism. In terms of biological role, prenyltransferase that catalyzes the transfer of the geranylgeranyl moiety of geranylgeranyl diphosphate (GGPP) to the C3 hydroxyl of sn-glycerol-1-phosphate (G1P). This reaction is the first ether-bond-formation step in the biosynthesis of archaeal membrane lipids. This is Geranylgeranylglyceryl phosphate synthase from Methanococcoides burtonii (strain DSM 6242 / NBRC 107633 / OCM 468 / ACE-M).